Here is a 607-residue protein sequence, read N- to C-terminus: DNA primase (607 aa).

The segment at cysteine 39–cysteine 63 adopts a CHC2-type zinc-finger fold. The Toprim domain occupies asparagine 267–asparagine 350. 3 residues coordinate Mg(2+): glutamate 273, aspartate 319, and aspartate 321.

This sequence belongs to the DnaG primase family. As to quaternary structure, monomer. Interacts with DnaB. The cofactor is Zn(2+). Requires Mg(2+) as cofactor.

The enzyme catalyses ssDNA + n NTP = ssDNA/pppN(pN)n-1 hybrid + (n-1) diphosphate.. RNA polymerase that catalyzes the synthesis of short RNA molecules used as primers for DNA polymerase during DNA replication. This Mycoplasma genitalium (strain ATCC 33530 / DSM 19775 / NCTC 10195 / G37) (Mycoplasmoides genitalium) protein is DNA primase.